The primary structure comprises 810 residues: Transmembrane channel-like protein 6 (810 aa).

Residues 1 to 26 (MAQSLALALDVPETTGDEGLEPSPYE) form a disordered region. Residues 1–205 (MAQSLALALD…GAFSCCSRLR (205 aa)) lie on the Lumenal side of the membrane. The span at 15–26 (TGDEGLEPSPYE) shows a compositional bias: acidic residues. Position 88 is a phosphothreonine (threonine 88). Arginine 93 carries the omega-N-methylarginine modification. Residue asparagine 102 is glycosylated (N-linked (GlcNAc...) asparagine). Threonine 104 carries the post-translational modification Phosphothreonine. Serine 136 carries the phosphoserine modification. A helical membrane pass occupies residues 206 to 226 (YTCMLALHSLGLALLSGLYAA). At 227 to 253 (RPWRYALKQIGGQFGSSVLSYFLFLKT) the chain is on the cytoplasmic side. The chain crosses the membrane as a helical span at residues 254–274 (LLAFNALMLLPLLAFLVGVQA). The Lumenal portion of the chain corresponds to 275-338 (AFPPDPAGPV…PRLGSLPYNM (64 aa)). N-linked (GlcNAc...) asparagine glycosylation occurs at asparagine 311. Residues 339-359 (PLAYLFTMGATFFLTCIILVY) form a helical membrane-spanning segment. Topologically, residues 360–429 (SMSHSFGESY…PRSVCGQLRQ (70 aa)) are cytoplasmic. The chain crosses the membrane as a helical span at residues 430 to 450 (VVVLGLGWLLCLGSTMGCTVA). The Lumenal portion of the chain corresponds to 451-468 (VLTFSEVMIQRPASGGQG). The helical transmembrane segment at 469–489 (VEALALPLVVSVLNLGASYLF) threads the bilayer. The Cytoplasmic portion of the chain corresponds to 490-504 (RGLATLERHDSPVLE). A helical transmembrane segment spans residues 505-525 (VYMAICRNLILKMAVLGVLCY). Residues 526–552 (HWLGRRVATLQGQCWEDFVGQELYRFM) lie on the Lumenal side of the membrane. Residues 553-573 (VVDFIFMLLDSLFGELVWRLI) traverse the membrane as a helical segment. The Cytoplasmic portion of the chain corresponds to 574–603 (SEKKLKRGQKPEFDIARNVLDLIYGQTLTW). A helical transmembrane segment spans residues 604–624 (LGVLFSPLLPAVQILRLLFLF). The Lumenal segment spans residues 625-649 (HIKKASLMANCQAPRRPWLASHMST). A helical membrane pass occupies residues 650–670 (VFLTLLCFPSFLGAAVFLCYA). Over 671–721 (VWQVRPSSTCGPFRTLNTMYEAGTVWVRRLEHAGSGASWLPWLHHFLVENT) the chain is Cytoplasmic. A helical membrane pass occupies residues 722–742 (FFLFLASALLLAVIYFNIQVV). The Lumenal portion of the chain corresponds to 743-810 (KGQRKVICLL…QKEPCNPRSP (68 aa)). Residues 775–810 (EEEGRSRPGRTQDATEPPAWHEDGGDQKEPCNPRSP) form a disordered region. The segment covering 793-810 (AWHEDGGDQKEPCNPRSP) has biased composition (basic and acidic residues).

The protein belongs to the TMC family. As to quaternary structure, interacts with TMC8. Interacts and forms a complex with TMC8 and CIB1; the interaction stabilizes each component of the complex. Interacts and forms a complex with TMC8 and SLC30A1/ZNT1; the interaction regulates zinc transport into the ER. As to expression, widely expressed. Highly expressed in thymus, lung and spleen. Expressed in lymphocytes and peripheral lymphocytes. Expressed in small and medium dorsal root ganglion (DRG) neurons.

Its subcellular location is the endoplasmic reticulum membrane. Functionally, acts as a regulatory protein involved in the regulation of numerous cellular processes. Together with its homolog TMC8/EVER2, forms a complex with calcium-binding protein CIB1 in lymphocytes and keratynocytes where TMC6 and TMC8 stabilize CIB1 and reciprocally. Together with TMC8, also forms a complex with and activates zinc transporter ZNT1 at the ER membrane of keratynocytes, thereby facilitating zinc uptake into the ER. Down-regulates the activity of transcription factors induced by zinc and cytokines. Also plays a role in thermal sensation by inhibiting the M-channel (KCNQ2-KCNQ3 channel) current in primary sensory neurons. This Mus musculus (Mouse) protein is Transmembrane channel-like protein 6.